The sequence spans 100 residues: MKKVLFLVVALASFAFGADGEQIKAFSVVAAGIGLGVAALGGAIGMGHTAAATILGTARNPGLGGKLLTTMFIALAMIEAQVIYALVIALIALYANPFLG.

Helical transmembrane passes span 26 to 46 and 71 to 91; these read FSVV…AIGM and MFIA…IALI.

The protein belongs to the ATPase C chain family. F-type ATPases have 2 components, F(1) - the catalytic core - and F(0) - the membrane proton channel. F(1) has five subunits: alpha(3), beta(3), gamma(1), delta(1), epsilon(1). F(0) has three main subunits: a(1), b(2) and c(10-14). The alpha and beta chains form an alternating ring which encloses part of the gamma chain. F(1) is attached to F(0) by a central stalk formed by the gamma and epsilon chains, while a peripheral stalk is formed by the delta and b chains.

The protein resides in the cell inner membrane. Its function is as follows. F(1)F(0) ATP synthase produces ATP from ADP in the presence of a proton or sodium gradient. F-type ATPases consist of two structural domains, F(1) containing the extramembraneous catalytic core and F(0) containing the membrane proton channel, linked together by a central stalk and a peripheral stalk. During catalysis, ATP synthesis in the catalytic domain of F(1) is coupled via a rotary mechanism of the central stalk subunits to proton translocation. Functionally, key component of the F(0) channel; it plays a direct role in translocation across the membrane. A homomeric c-ring of between 10-14 subunits forms the central stalk rotor element with the F(1) delta and epsilon subunits. In Campylobacter fetus subsp. fetus (strain 82-40), this protein is ATP synthase subunit c.